Consider the following 132-residue polypeptide: MDYAFLPPEINSARMYSGPGPNSMLVAAASWDALAAELASAAENYGSVIARLTGMHWWGPASTSMLAMSAPYVEWLERTAAQTKQTATQARAAAAAFEQAHAMTVPPALVTGIRGAIVVETASASNTAGTPP.

The protein belongs to the mycobacterial PPE family.

This is an uncharacterized protein from Mycobacterium tuberculosis (strain ATCC 25618 / H37Rv).